A 703-amino-acid polypeptide reads, in one-letter code: Protein CNGC15c (703 aa).

The segment covering 1 to 10 (MGFDNPRSER) has biased composition (basic and acidic residues). The tract at residues 1–23 (MGFDNPRSERFEDDPEISKIPTT) is disordered. 5 consecutive transmembrane segments (helical) span residues 91 to 111 (IFLVACLVSLFVDPLFFYLPV), 179 to 199 (GFWLDFIAALPLPQVLIWIII), 216 to 236 (FFIIFQYIPRLYLIFPLSSQI), 255 to 275 (LMLYMLASHILGACWYLLSIE), and 372 to 392 (FIGEIMVAIVVATLGLVLFAL). 480–565 (LFDQMDERML…WALDPRPSVI (86 aa)) is a binding site for a nucleoside 3',5'-cyclic phosphate. The IQ domain maps to 616–644 (RTWAACFIQAAWRRHKKRKEAAELRAKEN). Residues 676–703 (KGVNMHSGTNSGVVSSLQKPTEPDFSDE) are disordered. The span at 681–694 (HSGTNSGVVSSLQK) shows a compositional bias: polar residues.

This sequence belongs to the cyclic nucleotide-gated cation channel (TC 1.A.1.5) family. As to quaternary structure, interacts (via N-terminus) with DMI1 (via c-terminus). The Nod factor has no effect on this interaction, implying that the complex is maintained after activation. In terms of tissue distribution, expressed in roots, stems, leaves, flowers and pods.

Its subcellular location is the nucleus membrane. Its function is as follows. Cyclic nucleotide-gated channel involved in the establishment of both rhizobial and mycorrhizal associations. Required for full activation of nuclear-localized Ca(2+) oscillations by Nod and Myc factors. Simultaneous activation of the K(+)-permeable channel DMI1 and the Ca(2+) channel CNGC15 can give rise to sustained Ca(2+) oscillations. May function during fertilization in both female and male gametophytic Ca(2+) signaling. The chain is Protein CNGC15c from Medicago truncatula (Barrel medic).